A 347-amino-acid chain; its full sequence is Phosphate acyltransferase (347 aa).

This sequence belongs to the PlsX family. Homodimer. Probably interacts with PlsY.

Its subcellular location is the cytoplasm. The enzyme catalyses a fatty acyl-[ACP] + phosphate = an acyl phosphate + holo-[ACP]. It participates in lipid metabolism; phospholipid metabolism. In terms of biological role, catalyzes the reversible formation of acyl-phosphate (acyl-PO(4)) from acyl-[acyl-carrier-protein] (acyl-ACP). This enzyme utilizes acyl-ACP as fatty acyl donor, but not acyl-CoA. The chain is Phosphate acyltransferase from Dehalococcoides mccartyi (strain ATCC BAA-2100 / JCM 16839 / KCTC 5957 / BAV1).